Consider the following 418-residue polypeptide: UDP-N-acetylglucosamine 1-carboxyvinyltransferase (418 aa).

A phosphoenolpyruvate-binding site is contributed by 22–23 (KN). R92 is a binding site for UDP-N-acetyl-alpha-D-glucosamine. The active-site Proton donor is C116. Residue C116 is modified to 2-(S-cysteinyl)pyruvic acid O-phosphothioketal. Residues D305 and I327 each coordinate UDP-N-acetyl-alpha-D-glucosamine.

This sequence belongs to the EPSP synthase family. MurA subfamily.

Its subcellular location is the cytoplasm. It catalyses the reaction phosphoenolpyruvate + UDP-N-acetyl-alpha-D-glucosamine = UDP-N-acetyl-3-O-(1-carboxyvinyl)-alpha-D-glucosamine + phosphate. It functions in the pathway cell wall biogenesis; peptidoglycan biosynthesis. Its function is as follows. Cell wall formation. Adds enolpyruvyl to UDP-N-acetylglucosamine. The sequence is that of UDP-N-acetylglucosamine 1-carboxyvinyltransferase from Gluconobacter oxydans (strain 621H) (Gluconobacter suboxydans).